Consider the following 577-residue polypeptide: MRSHFCTEISEKDVGKTIKVAGWCNTYRDHGGVVFIDLRDKSGLVQLVCDPSSKAYEKALEVRSEFVLVAKGKARLRGPGLENPKLKTGKIEIVLEELVIENKSATPPIEIGNKSVNEDLRLKYRYLDLRSPNSYEIFKLRSEVALITRNTLAQKGFLEIETPILSKTTPEGARDYLVPSRVHEGEFFALPQSPQLFKQLLMVGGMDRYFQIARCFRDEDLRADRQPEFTQIDAEMSFCDENDVMGVVEDLLQAIFKAIGHTISKPFKRMPYKEAMENYGSDKPDLRFKLPLIEVGDCFMDSSNAIFSNIAKDPKNKRIKALNVKGADALFSRSVLKELEEFVRQFGAKGLAYLQIKEDGIKGPLVKFLSEKGLKNILEKTGAKTGDIVFFGAGDKKIVLDYMGRLRLKVAETLDLIDKDALNFLWVVNFPMFEKTENGYHAAHHPFTMPKNIECEDIEEIEAHAYDVVLNGVELGGGSIRIHKEEMQKKVFEKINIHEEEAQKKFGFLLEALKFGAPPHGGFAIGFDRLIMLMTKSHSIRDVIAFPKTQKASCLLTNAPSPINEEQLRELHIRLRK.

Glutamate 171 provides a ligand contact to L-aspartate. The aspartate stretch occupies residues 195 to 198 (QLFK). Arginine 217 contacts L-aspartate. Residues 217–219 (RDE) and glutamine 226 each bind ATP. Residue histidine 444 participates in L-aspartate binding. Glutamate 474 is an ATP binding site. Arginine 481 provides a ligand contact to L-aspartate. ATP is bound at residue 526-529 (GFDR).

This sequence belongs to the class-II aminoacyl-tRNA synthetase family. Type 1 subfamily. As to quaternary structure, homodimer.

Its subcellular location is the cytoplasm. The catalysed reaction is tRNA(Asx) + L-aspartate + ATP = L-aspartyl-tRNA(Asx) + AMP + diphosphate. Its function is as follows. Aspartyl-tRNA synthetase with relaxed tRNA specificity since it is able to aspartylate not only its cognate tRNA(Asp) but also tRNA(Asn). Reaction proceeds in two steps: L-aspartate is first activated by ATP to form Asp-AMP and then transferred to the acceptor end of tRNA(Asp/Asn). The protein is Aspartate--tRNA(Asp/Asn) ligase of Helicobacter pylori (strain G27).